An 84-amino-acid polypeptide reads, in one-letter code: Small ribosomal subunit protein uS17 (84 aa).

The protein belongs to the universal ribosomal protein uS17 family. Part of the 30S ribosomal subunit.

In terms of biological role, one of the primary rRNA binding proteins, it binds specifically to the 5'-end of 16S ribosomal RNA. The polypeptide is Small ribosomal subunit protein uS17 (Borrelia hermsii (strain HS1 / DAH)).